A 221-amino-acid polypeptide reads, in one-letter code: Octanoyltransferase (221 aa).

The BPL/LPL catalytic domain maps to 38–220 (GEIPDTLLLL…GFREVLGDPG (183 aa)). Residues 84-91 (RGGDATFH), 149-151 (AIG), and 163-165 (GFA) each bind substrate. The active-site Acyl-thioester intermediate is the C181.

Belongs to the LipB family.

The protein resides in the cytoplasm. It carries out the reaction octanoyl-[ACP] + L-lysyl-[protein] = N(6)-octanoyl-L-lysyl-[protein] + holo-[ACP] + H(+). It functions in the pathway protein modification; protein lipoylation via endogenous pathway; protein N(6)-(lipoyl)lysine from octanoyl-[acyl-carrier-protein]: step 1/2. Catalyzes the transfer of endogenously produced octanoic acid from octanoyl-acyl-carrier-protein onto the lipoyl domains of lipoate-dependent enzymes. Lipoyl-ACP can also act as a substrate although octanoyl-ACP is likely to be the physiological substrate. This chain is Octanoyltransferase, found in Rubrobacter xylanophilus (strain DSM 9941 / JCM 11954 / NBRC 16129 / PRD-1).